Reading from the N-terminus, the 287-residue chain is MRIIVITGMSGSGKSTAVRALEDEGFYCIDNLPMRLFRPFVELIEKSGDSYRGIVLVADIRGREFLKGFENTFQTLRDQGHGVEIFFIDASDDVLIRRFSETRRRHPAEEQCTVSEGIRIERERLSTLRQMATRIIDSSDFNVHQLKELILRIVRGEDAETPMVIEIKSFGFRYGIPLESSIVMDVRFLPNPFFVPRLKPGSGLDDEVREYILDNPKTATFLDCFFPMLDMLVPAHRQEGKYYLTISIGCTGGRHRSVAIAEATAMYLRADWPTVRITHRDIEKGQQ.

ATP is bound at residue 8–15; the sequence is GMSGSGKS. Position 59–62 (59–62) interacts with GTP; that stretch reads DIRG.

The protein belongs to the RapZ-like family.

Its function is as follows. Displays ATPase and GTPase activities. This is Nucleotide-binding protein Ppro_0977 from Pelobacter propionicus (strain DSM 2379 / NBRC 103807 / OttBd1).